Consider the following 222-residue polypeptide: Probable fimbrial chaperone EcpB (222 aa).

A signal peptide spans 1 to 20; it reads MKKHLLPLALLFSGISPAQA.

Belongs to the EcpB/EcpE family.

In terms of biological role, part of the ecpRABCDE operon, which encodes the E.coli common pilus (ECP). ECP is found in both commensal and pathogenic strains and plays a dual role in early-stage biofilm development and host cell recognition. The sequence is that of Probable fimbrial chaperone EcpB (ecpB) from Escherichia coli (strain K12).